Here is a 222-residue protein sequence, read N- to C-terminus: Sororin-like protein (222 aa).

The segment at 1–189 is disordered; it reads MEAPRSVGGR…VKQEKEDPVS (189 aa). Over residues 24–33 the composition is skewed to low complexity; that stretch reads SRSSQQSSSS. Positions 47–60 are enriched in basic and acidic residues; it reads RLVEQTTLKEKPKD. Residues 88 to 105 show a composition bias toward low complexity; the sequence is ADLASPASAPSRPQTSRS. A Nuclear localization signal motif is present at residues 155–162; that stretch reads GKKTRQAS. Over residues 167-179 the composition is skewed to basic residues; it reads KTLKVAPKKRQRT. Residues 192–214 form a C-terminal Sororin domain region; sequence CQDYIEKQKAYFAEIDAFELPVE.

The protein belongs to the sororin family.

It is found in the nucleus. Regulator of sister chromatid cohesion in mitosis stabilizing cohesin complex association with chromatin. Antagonizes the action of WAPL proteins (WAPL1 and WAPL2) which stimulates cohesin dissociation from chromatin, particularly during somatic division in root cells and meiocytes during anaphase I. Required for centromeric sister chromatid cohesion during male meiosis (microsporogenesis). Cohesion ensures that chromosome partitioning is accurate in dividing cells and may play an important role in DNA repair. The polypeptide is Sororin-like protein (Arabidopsis thaliana (Mouse-ear cress)).